Reading from the N-terminus, the 481-residue chain is Cysteine--tRNA ligase (481 aa).

Cysteine 29 contacts Zn(2+). The 'HIGH' region motif lies at 31-41; that stretch reads PTVYDYSHLGH. Zn(2+)-binding residues include cysteine 210, histidine 235, and glutamate 239. The 'KMSKS' region motif lies at 272-276; it reads KMSKS. Lysine 275 serves as a coordination point for ATP.

This sequence belongs to the class-I aminoacyl-tRNA synthetase family. In terms of assembly, monomer. It depends on Zn(2+) as a cofactor.

The protein localises to the cytoplasm. It catalyses the reaction tRNA(Cys) + L-cysteine + ATP = L-cysteinyl-tRNA(Cys) + AMP + diphosphate. The chain is Cysteine--tRNA ligase from Anaeromyxobacter sp. (strain K).